Consider the following 293-residue polypeptide: 5'-3' exoribonuclease Rnm (293 aa).

The Mn(2+) site is built by His-17, His-19, Asp-24, His-49, Glu-76, His-87, His-202, Asp-259, and His-261.

This sequence belongs to the PHP family. TrpH/YciV subfamily. Requires Mn(2+) as cofactor.

It carries out the reaction a ribonucleoside 3',5'-bisphosphate + H2O = a ribonucleoside 5'-phosphate + phosphate. Exoribonuclease that catalyzes the last steps of 5S, 16S and 23S rRNA 5'-end maturation. Removes 3 nucleotides (nt) from the 5' end of 5S, 16S and 23S rRNA precursors to generate the mature 5' ends. 5S and 23S rRNA maturation occurs more efficiently and accurately on ribosomal particles as compared to free RNA. Efficiently catalyzes the hydrolysis of the 3'-phosphate from 3',5'-bis-phosphonucleotides as well as the successive hydrolysis of 5'-phosphomononucleotides from the 5'-end of short pieces of RNA and DNA, with no specificity toward the identity of the nucleotide base. Is more efficient at hydrolyzing RNA oligonucleotides than DNA oligonucleotides. This enzyme can also hydrolyze annealed DNA duplexes, albeit at a catalytic efficiency lower than that of the corresponding single-stranded oligonucleotides. The polypeptide is 5'-3' exoribonuclease Rnm (Salmonella typhimurium (strain LT2 / SGSC1412 / ATCC 700720)).